The sequence spans 232 residues: Ornithine carbamoyltransferase (232 aa).

Carbamoyl phosphate contacts are provided by residues Q15, R39, and 66-69 (HPTQ). L-ornithine is bound by residues N99, D163, and 167 to 168 (SM). Carbamoyl phosphate contacts are provided by residues 204–207 (HCLP) and T232.

It belongs to the aspartate/ornithine carbamoyltransferase superfamily. OTCase family.

The protein localises to the cytoplasm. The catalysed reaction is carbamoyl phosphate + L-ornithine = L-citrulline + phosphate + H(+). It functions in the pathway amino-acid biosynthesis; L-arginine biosynthesis; L-arginine from L-ornithine and carbamoyl phosphate: step 1/3. Reversibly catalyzes the transfer of the carbamoyl group from carbamoyl phosphate (CP) to the N(epsilon) atom of ornithine (ORN) to produce L-citrulline. The chain is Ornithine carbamoyltransferase (argF) from Neisseria perflava.